Consider the following 436-residue polypeptide: Small ribosomal subunit protein uS5m (436 aa).

In terms of domain architecture, S5 DRBM spans 152–218 (FETYCLEVKR…GMASRKLFHV (67 aa)). Residues 417–436 (GVEPMPLGIGLSHVVPKKDD) form a disordered region.

Belongs to the universal ribosomal protein uS5 family. In terms of assembly, component of the mitochondrial ribosome small subunit (28S) which comprises a 12S rRNA and about 30 distinct proteins.

It localises to the mitochondrion. The polypeptide is Small ribosomal subunit protein uS5m (mrps-5) (Caenorhabditis elegans).